Reading from the N-terminus, the 79-residue chain is Large ribosomal subunit protein bL31 (79 aa).

It belongs to the bacterial ribosomal protein bL31 family. Type A subfamily. As to quaternary structure, part of the 50S ribosomal subunit.

Binds the 23S rRNA. The protein is Large ribosomal subunit protein bL31 (rpmE) of Rickettsia bellii (strain RML369-C).